Reading from the N-terminus, the 156-residue chain is Small ribosomal subunit protein uS7 (156 aa).

Belongs to the universal ribosomal protein uS7 family. As to quaternary structure, part of the 30S ribosomal subunit. Contacts proteins S9 and S11.

Functionally, one of the primary rRNA binding proteins, it binds directly to 16S rRNA where it nucleates assembly of the head domain of the 30S subunit. Is located at the subunit interface close to the decoding center, probably blocks exit of the E-site tRNA. In Synechococcus sp. (strain JA-2-3B'a(2-13)) (Cyanobacteria bacterium Yellowstone B-Prime), this protein is Small ribosomal subunit protein uS7.